We begin with the raw amino-acid sequence, 396 residues long: MAKAKFERTKPHVNIGTIGHVDHGKTTLTAAISKVLYDKYPTLNEKRDFASIDSAPEERQRGITINISHVEYQTEKRHYAHVDAPGHADYIKNMITGAAQMDGAILVVAATDGPMAQTREHVLLARQVGVPYLLVALNKADMVDDEELLDLVEMEVRELLSSQGFDGDEAPVVRVSGLKALEGDPEWVKSVEDLMAAVDESVPDPVRDRDKPFLMPIEDVFTITGRGTVVTGRAERGTLAINSEVEIVGIRPVQKTTVTGIEMFHKQLDEAWAGENCGLLLRGLKRDDVERGQVVVKPGSITPHTDFEANVYILSKDEGGRHNPFYSNYRPQFYFRTTDVTGVITLPEGTEMVMPGDNTEMTVALIQPIAMEEGLGFAIREGGRTVGSGRVTKIIK.

The tr-type G domain maps to 10 to 206 (KPHVNIGTIG…AVDESVPDPV (197 aa)). The G1 stretch occupies residues 19-26 (GHVDHGKT). GTP is bound at residue 19–26 (GHVDHGKT). Residue Thr-26 participates in Mg(2+) binding. Residues 62 to 66 (GITIN) are G2. The segment at 83 to 86 (DAPG) is G3. Residues 83-87 (DAPGH) and 138-141 (NKAD) contribute to the GTP site. The segment at 138–141 (NKAD) is G4. The interval 176–178 (SGL) is G5.

This sequence belongs to the TRAFAC class translation factor GTPase superfamily. Classic translation factor GTPase family. EF-Tu/EF-1A subfamily. As to quaternary structure, monomer.

The protein localises to the cytoplasm. It catalyses the reaction GTP + H2O = GDP + phosphate + H(+). Functionally, GTP hydrolase that promotes the GTP-dependent binding of aminoacyl-tRNA to the A-site of ribosomes during protein biosynthesis. The chain is Elongation factor Tu from Arthrobacter sp. (strain FB24).